A 187-amino-acid polypeptide reads, in one-letter code: LSM complex subunit LSM4 (187 aa).

A Sm domain is found at 2-85 (LPLYLLTNAK…IKFIKLQDNI (84 aa)). Positions 93 to 187 (INSNNNSNSN…NSSSPQKVEF (95 aa)) are disordered. The span at 112–167 (NRDSNNNRGNYNRRNNNNGNSNRRPYSQNRQYNNSNSSNINNSINSINSNNQNMNN) shows a compositional bias: low complexity. Omega-N-methylarginine is present on Arg-119. Over residues 175–187 (HHFNSSSPQKVEF) the composition is skewed to polar residues. Phosphoserine is present on Ser-181.

This sequence belongs to the snRNP Sm proteins family. As to quaternary structure, component of the heptameric LSM1-LSM7 complex that forms a seven-membered ring structure with a donut shape. The LSm subunits are arranged in the order LSM1, LSM2, LSM3, LSM6, LSM5, LSM7 and LSM4. Except for LSM1, where a C-terminal helix crosses the ring structure to form additional interactions with LSM3 and LSM6, each subunit interacts only with its two neighboring subunits. The LSM1-LSM7 complex interacts with PAT1; within the complex PAT1 has direct interactions with LSM2 and LSM3. The LSM1-LSM7 complex interacts with XRN1. Component of the heptameric LSM2-LSM8 complex that forms a seven-membered ring structure with a donut shape; an RNA strand can pass through the hole in the center of the ring structure. The LSm subunits are arranged in the order LSM8, LSM2, LSM3, LSM6, LSM5, LSM7 and LSM4. Component of the spliceosome U4/U6-U5 tri-snRNP complex composed of the U4, U6 and U5 snRNAs and at least PRP3, PRP4, PRP6, PRP8, PRP18, PRP31, PRP38, SNU13, SNU23, SNU66, SNU114, SPP381, SMB1, SMD1, SMD2, SMD3, SMX2, SMX3, LSM2, LSM3, LSM4, LSM5, LSM6, LSM7, LSM8, BRR2 and DIB1. May be found in a complex comprising LSM2-LSM7 without LSM1 or LSM8; the complex associates with pre-P RNA and snoRNA SNR5.

Its subcellular location is the nucleus. It is found in the cytoplasm. Its function is as follows. Component of LSm protein complexes, which are involved in RNA processing and may function in a chaperone-like manner. Component of the cytoplasmic LSM1-LSM7 complex which is involved in mRNA degradation by activating the decapping step. Together with PAT1, the LSM1-LSM7 complex binds to osmotic stress-activated mRNAs to attenuate the osmotic stress response, probably by limiting ribosome access to the mRNA and consequently translation. Component of the nuclear LSM2-LSM8 complex, which is involved in spliceosome assembly. The LSM2-LSM8 complex plays a role in the biogenesis of the spliceosomal U4/U6-U5 tri-snRNP complex by accelerating PRP24-mediated annealing of U4/U6 di-snRNA. The LSM2-LSM8 complex binds U6 snRNA terminating with a non-cyclic 3' phosphate group. LSM2-LSM8 is probably also involved in degradation of nuclear pre-mRNA by targeting them for decapping. LSM2-LSM8 could be involved in processing of pre-tRNAs, pre-rRNAs and U3 snoRNA, although involvement may be indirect. In a complex that probably contains LSM2-LSM7, but not LSM1 or LSM8, associates with the precursor of the RNA component of RNase P (pre-P RNA) and may be involved in maturing pre-P RNA; the complex also associates with snoRNA SNR5. The sequence is that of LSM complex subunit LSM4 from Saccharomyces cerevisiae (strain ATCC 204508 / S288c) (Baker's yeast).